The chain runs to 283 residues: NAD kinase (283 aa).

Asp68 (proton acceptor) is an active-site residue. Residues 68 to 69 (DG), Arg73, 142 to 143 (ND), Arg153, Arg170, Asp172, and 183 to 188 (TAYSLS) contribute to the NAD(+) site.

This sequence belongs to the NAD kinase family. Requires a divalent metal cation as cofactor.

Its subcellular location is the cytoplasm. The enzyme catalyses NAD(+) + ATP = ADP + NADP(+) + H(+). Involved in the regulation of the intracellular balance of NAD and NADP, and is a key enzyme in the biosynthesis of NADP. Catalyzes specifically the phosphorylation on 2'-hydroxyl of the adenosine moiety of NAD to yield NADP. This Symbiobacterium thermophilum (strain DSM 24528 / JCM 14929 / IAM 14863 / T) protein is NAD kinase.